Here is a 92-residue protein sequence, read N- to C-terminus: Small ribosomal subunit protein uS19 (92 aa).

It belongs to the universal ribosomal protein uS19 family.

Functionally, protein S19 forms a complex with S13 that binds strongly to the 16S ribosomal RNA. The polypeptide is Small ribosomal subunit protein uS19 (Lysinibacillus sphaericus (strain C3-41)).